The primary structure comprises 795 residues: Phenylalanine--tRNA ligase beta subunit (795 aa).

The tRNA-binding domain maps to 39–148; sequence AGEFTGVKVG…EGTTLGADVR (110 aa). Residues 401-476 form the B5 domain; the sequence is PKANTVELRR…RIYGYNNIPN (76 aa). Asp-454, Asp-460, Glu-463, and Glu-464 together coordinate Mg(2+). The region spanning 701–794 is the FDX-ACB domain; sequence SKFPANRRDI…IGEKFSATLR (94 aa).

This sequence belongs to the phenylalanyl-tRNA synthetase beta subunit family. Type 1 subfamily. In terms of assembly, tetramer of two alpha and two beta subunits. It depends on Mg(2+) as a cofactor.

It is found in the cytoplasm. The catalysed reaction is tRNA(Phe) + L-phenylalanine + ATP = L-phenylalanyl-tRNA(Phe) + AMP + diphosphate + H(+). The polypeptide is Phenylalanine--tRNA ligase beta subunit (Aliivibrio fischeri (strain ATCC 700601 / ES114) (Vibrio fischeri)).